The chain runs to 160 residues: uncharacterized protein (160 aa).

Residues 1 to 29 form the signal peptide; it reads MCGLGIVPMVKPALFGMLILVIGTSTVQA.

This is an uncharacterized protein from Sinorhizobium fredii (strain NBRC 101917 / NGR234).